The primary structure comprises 404 residues: MMLNLDAIRAQFPALQQIVNGNPLVYLDSAATTQKPQCVIDAISHYYSQHNANVHRGSHSLTAQATSQFEGAREQVAQFIGAPSSKNIIWTRGATEALNLIAQSYARSTLQAGDEILVSETEHHANIVPWQMVAEQTGAKVVKIPMTTTGEFGLAAFRQLLSPRCKIVALAHITNVTGTRQPIEAVIQAAHQQGAIVVIDGAQGIVHETVDVRALDADFYVFSGHKLYAPAGIGVLYGKTALLEAMPPWHGGGKMVEKVSFDGTTFTGLPGKFEAGTPNVAGAIALATAIDWYQSLDRAAVEAHLHQLQQQAYQAISQIDDIRVLGYQPNASVLSLVMDGVHHQDLATLLDQQGIAVRAGHHCAHPLMDAFGVKGTVRISFGVYNSAEEVERLIAAIHKAVDLL.

The residue at position 226 (lysine 226) is an N6-(pyridoxal phosphate)lysine. Cysteine 363 functions as the Cysteine persulfide intermediate in the catalytic mechanism.

Belongs to the class-V pyridoxal-phosphate-dependent aminotransferase family. Csd subfamily. It depends on pyridoxal 5'-phosphate as a cofactor.

It catalyses the reaction (sulfur carrier)-H + L-cysteine = (sulfur carrier)-SH + L-alanine. Catalyzes the removal of elemental sulfur and selenium atoms from L-cysteine, L-cystine, L-selenocysteine, and L-selenocystine to produce L-alanine. The sequence is that of Probable cysteine desulfurase (csd) from Vibrio cholerae serotype O1 (strain ATCC 39315 / El Tor Inaba N16961).